The primary structure comprises 165 residues: RNA polymerase II transcriptional coactivator KELP (165 aa).

Residues 3 to 60 form the DEK-C domain; sequence KETKEKIEKTVIEILSESDMKEITEFKVRKLASEKLAIDLSEKSHKAFVRSVVEKFLD. A disordered region spans residues 66–93; the sequence is EYENSQVNKEEEDGDKDCGKGNKEFDDD.

It belongs to the transcriptional coactivator PC4 family.

It localises to the nucleus. Its function is as follows. General coactivator that functions cooperatively with TAFs and mediates functional interactions between upstream activators and the general transcriptional machinery. Binds single-stranded DNA. The polypeptide is RNA polymerase II transcriptional coactivator KELP (KELP) (Arabidopsis thaliana (Mouse-ear cress)).